Here is a 243-residue protein sequence, read N- to C-terminus: Terpene cyclase nodB (243 aa).

The next 3 membrane-spanning stretches (helical) occupy residues 19–39, 50–70, and 75–95; these read ISDI…AGMI, MAPL…LIYP, and IEQG…YTAI. N-linked (GlcNAc...) asparagine glycosylation is present at Asn111. The next 4 helical transmembrane spans lie at 112–132, 134–154, 169–189, and 205–225; these read ITLI…ALAA, IGPA…LSVG, SYTL…FAIL, and LVLW…ICLW.

Belongs to the paxB family.

The protein localises to the membrane. The protein operates within secondary metabolite biosynthesis. Terpene cyclase; part of the gene cluster that mediates the biosynthesis of the indole diterpenes nodulisporic acids (NA). Nodulisporic acid A (NAA) and its chemically modified derivatives are of particular significance because of their highly potent insecticidal activity against blood-feeding arthropods and lack of observable adverse effects on mammals, in particular the tremogenicity associated with the paspaline-derived IDTs is not observed. The geranylgeranyl diphosphate (GGPP) synthase ggs1, localized outside of the cluster, is proposed to catalyze the first step in nodulisporic acid biosynthesis via conversion of farnesyl pyrophosphate and isopentyl pyrophosphate into geranylgeranyl pyrophosphate (GGPP). Condensation of indole-3-glycerol phosphate with GGPP by the prenyl transferase nodC then forms 3-geranylgeranylindole (3-GGI). Epoxidation by the FAD-dependent monooxygenase nodM leads to a single-epoxidized-GGI that is substrate of the terpene cyclase nodB for cyclization to yield emindole SB. The terminal methyl carbon, C28, of emindole SB is then oxidized by the cytochrome P450 monooxygenase nodW to produce nodulisporic acid F (NAF), the pentacyclic core of NAA. NAF is converted to nodulisporic acid E (NAE) via prenylation. This step is probably performed by one of the indole diterpene prenyltransferases nodD1 or nodD2. Several oxidation steps performed by the FAD-linked oxidoreductase nodO and one of the cytochrome P450 monooxygenase nodR, nodX or nodZ further convert NAE to nodulisporic acid D (NAD). NAD is substrate of cytochrome P450 monooxygenase nodJ to produce the precursor of nodulisporic acid C (NAC), converted to NAC by one of the indole diterpene prenyltransferases nodD1 or nodD2. The FAD-dependent monooxygenase nodY2 then oxidizes NAC to nodulisporic acid B (NAB). Finally NAB is converted to NAA by one of the cytochrome P450 monooxygenases nodR, nodX or nodZ. In Hypoxylon pulicicidum, this protein is Terpene cyclase nodB.